The following is a 385-amino-acid chain: 3-hydroxyisobutyryl-CoA hydrolase, mitochondrial (385 aa).

Residues Glu120, Gly145, Glu168, and Asp176 each coordinate substrate.

It belongs to the enoyl-CoA hydratase/isomerase family.

It is found in the mitochondrion. The catalysed reaction is 3-hydroxy-2-methylpropanoyl-CoA + H2O = 3-hydroxy-2-methylpropanoate + CoA + H(+). It participates in amino-acid degradation; L-valine degradation. Functionally, hydrolyzes 3-hydroxyisobutyryl-CoA (HIBYL-CoA), a saline catabolite. Has high activity toward isobutyryl-CoA. Could be an isobutyryl-CoA dehydrogenase that functions in valine catabolism. Also hydrolyzes 3-hydroxypropanoyl-CoA. The protein is 3-hydroxyisobutyryl-CoA hydrolase, mitochondrial (hibch) of Xenopus tropicalis (Western clawed frog).